The following is a 233-amino-acid chain: Cysteine-rich venom protein (233 aa).

The signal sequence occupies residues 1–12 (PILAAVLQQSSG). In terms of domain architecture, SCP spans 31–159 (VDLHNSLRRS…PYSYFFVCQY (129 aa)). 8 cysteine pairs are disulfide-bonded: Cys-68–Cys-146, Cys-85–Cys-160, Cys-141–Cys-157, Cys-179–Cys-186, Cys-182–Cys-191, Cys-195–Cys-228, Cys-204–Cys-222, and Cys-213–Cys-226. The ShKT domain occupies 195 to 228 (CTRENKFTNCNTMVQQSSCQDNYMKTNCPASCFC).

Belongs to the CRISP family. Expressed by the venom gland.

Its subcellular location is the secreted. Its function is as follows. Blocks contraction of smooth muscle elicited by high potassium-induced depolarization, but does not block caffeine-stimulated contraction. May target voltage-gated calcium channels on smooth muscle. This Trimeresurus stejnegeri (Chinese green tree viper) protein is Cysteine-rich venom protein.